We begin with the raw amino-acid sequence, 639 residues long: Protein sly1 (639 aa).

Belongs to the STXBP/unc-18/SEC1 family.

It is found in the cytoplasm. This chain is Protein sly1 (sly1), found in Schizosaccharomyces pombe (strain 972 / ATCC 24843) (Fission yeast).